A 267-amino-acid polypeptide reads, in one-letter code: GTP cyclohydrolase FolE2 (267 aa).

This sequence belongs to the GTP cyclohydrolase IV family.

It catalyses the reaction GTP + H2O = 7,8-dihydroneopterin 3'-triphosphate + formate + H(+). It functions in the pathway cofactor biosynthesis; 7,8-dihydroneopterin triphosphate biosynthesis; 7,8-dihydroneopterin triphosphate from GTP: step 1/1. Functionally, converts GTP to 7,8-dihydroneopterin triphosphate. This chain is GTP cyclohydrolase FolE2, found in Cupriavidus necator (strain ATCC 17699 / DSM 428 / KCTC 22496 / NCIMB 10442 / H16 / Stanier 337) (Ralstonia eutropha).